The sequence spans 290 residues: Protease HtpX (290 aa).

The next 2 membrane-spanning stretches (helical) occupy residues 4-24 and 36-56; these read IFLF…TLKL and GSLL…SLFI. Zn(2+) is bound at residue His-142. Glu-143 is a catalytic residue. His-146 serves as a coordination point for Zn(2+). The next 2 membrane-spanning stretches (helical) occupy residues 150–170 and 193–213; these read GDMV…MFFA and FVAT…IVMW. Glu-219 contacts Zn(2+).

This sequence belongs to the peptidase M48B family. Zn(2+) is required as a cofactor.

The protein resides in the cell inner membrane. In Stutzerimonas stutzeri (strain A1501) (Pseudomonas stutzeri), this protein is Protease HtpX.